A 177-amino-acid chain; its full sequence is Probable adenylyl-sulfate kinase (177 aa).

Residue 12–19 coordinates ATP; that stretch reads GLSGAGKT. S86 acts as the Phosphoserine intermediate in catalysis.

This sequence belongs to the APS kinase family.

The catalysed reaction is adenosine 5'-phosphosulfate + ATP = 3'-phosphoadenylyl sulfate + ADP + H(+). It participates in sulfur metabolism; hydrogen sulfide biosynthesis; sulfite from sulfate: step 2/3. Its function is as follows. Catalyzes the synthesis of activated sulfate. In Synechocystis sp. (strain ATCC 27184 / PCC 6803 / Kazusa), this protein is Probable adenylyl-sulfate kinase (cysC).